Reading from the N-terminus, the 382-residue chain is uncharacterized protein (382 aa).

The next 12 helical transmembrane spans lie at valine 8–leucine 28, methionine 45–isoleucine 65, tyrosine 75–tryptophan 95, phenylalanine 102–serine 122, leucine 131–serine 151, leucine 157–phenylalanine 177, leucine 204–proline 224, glycine 231–glycine 251, valine 270–proline 290, alanine 291–cysteine 311, alanine 325–methionine 345, and serine 349–leucine 369.

It belongs to the major facilitator superfamily. YcaD (TC 2.A.1.26) family.

Its subcellular location is the cell inner membrane. This is an uncharacterized protein from Salmonella paratyphi B (strain ATCC BAA-1250 / SPB7).